Consider the following 139-residue polypeptide: Translation initiation factor 2 subunit beta (139 aa).

Belongs to the eIF-2-beta/eIF-5 family. Heterotrimer composed of an alpha, a beta and a gamma chain.

EIF-2 functions in the early steps of protein synthesis by forming a ternary complex with GTP and initiator tRNA. The protein is Translation initiation factor 2 subunit beta of Sulfurisphaera tokodaii (strain DSM 16993 / JCM 10545 / NBRC 100140 / 7) (Sulfolobus tokodaii).